We begin with the raw amino-acid sequence, 670 residues long: Mannosyl-oligosaccharide alpha-1,2-mannosidase IA (670 aa).

Residues 1-30 (MTGILPTYQRFVNGVPVPSISRRSFRLREK) are Cytoplasmic-facing. The helical; Signal-anchor for type II membrane protein transmembrane segment at 31–51 (YLIVSVLLTFGIVWLGALFYL) threads the bilayer. The Lumenal portion of the chain corresponds to 52–670 (PEFKSSNSVN…EPAHAQNNRI (619 aa)). N-linked (GlcNAc...) asparagine glycosylation occurs at N61. Positions 135–177 (DVAPSVSSSRGPSKPPVDAIEEPAVGNNAANKDVSPSGPKAES) are disordered. C480 and C512 are oxidised to a cystine. The active-site Proton donor is E526. T637 serves as a coordination point for Ca(2+).

Belongs to the glycosyl hydrolase 47 family. Requires Ca(2+) as cofactor. In terms of processing, N-glycosylated. Contains high mannose-type oligosaccharides.

The protein resides in the golgi apparatus membrane. The enzyme catalyses N(4)-(alpha-D-Man-(1-&gt;2)-alpha-D-Man-(1-&gt;2)-alpha-D-Man-(1-&gt;3)-[alpha-D-Man-(1-&gt;2)-alpha-D-Man-(1-&gt;3)-[alpha-D-Man-(1-&gt;2)-alpha-D-Man-(1-&gt;6)]-alpha-D-Man-(1-&gt;6)]-beta-D-Man-(1-&gt;4)-beta-D-GlcNAc-(1-&gt;4)-beta-D-GlcNAc)-L-asparaginyl-[protein] (N-glucan mannose isomer 9A1,2,3B1,2,3) + 4 H2O = N(4)-(alpha-D-Man-(1-&gt;3)-[alpha-D-Man-(1-&gt;3)-[alpha-D-Man-(1-&gt;6)]-alpha-D-Man-(1-&gt;6)]-beta-D-Man-(1-&gt;4)-beta-D-GlcNAc-(1-&gt;4)-beta-D-GlcNAc)-L-asparaginyl-[protein] (N-glucan mannose isomer 5A1,2) + 4 beta-D-mannose. It carries out the reaction N(4)-(alpha-D-Man-(1-&gt;2)-alpha-D-Man-(1-&gt;2)-alpha-D-Man-(1-&gt;3)-[alpha-D-Man-(1-&gt;3)-[alpha-D-Man-(1-&gt;2)-alpha-D-Man-(1-&gt;6)]-alpha-D-Man-(1-&gt;6)]-beta-D-Man-(1-&gt;4)-beta-D-GlcNAc-(1-&gt;4)-beta-D-GlcNAc)-L-asparaginyl-[protein] (N-glucan mannose isomer 8A1,2,3B1,3) + 3 H2O = N(4)-(alpha-D-Man-(1-&gt;3)-[alpha-D-Man-(1-&gt;3)-[alpha-D-Man-(1-&gt;6)]-alpha-D-Man-(1-&gt;6)]-beta-D-Man-(1-&gt;4)-beta-D-GlcNAc-(1-&gt;4)-beta-D-GlcNAc)-L-asparaginyl-[protein] (N-glucan mannose isomer 5A1,2) + 3 beta-D-mannose. The protein operates within protein modification; protein glycosylation. Strongly inhibited by 1-deoxymannojirimycin, an inhibitor of class I alpha-mannosidases, and by EDTA. EDTA inhibition is reversed by the addition of calcium, but not of magnesium. In terms of biological role, involved in the maturation of Asn-linked oligosaccharides. Converts Man(9)GlcNAc(2) to Man(5)GlcNAc(2) primarily through the Man(7)GlcNAc(2) isomer C processing intermediate. The sequence is that of Mannosyl-oligosaccharide alpha-1,2-mannosidase IA from Spodoptera frugiperda (Fall armyworm).